The following is a 622-amino-acid chain: Palmitoyltransferase ZDHHC13 (622 aa).

Met-1 bears the N-acetylmethionine mark. The Cytoplasmic segment spans residues 1–291; it reads MEGPGLGSQC…RLWRWLQKCE (291 aa). ANK repeat units lie at residues 43–78, 81–110, 115–144, 148–177, 181–211, 216–245, and 249–277; these read PLIE…VRQP, ENVS…VVDQ, LNST…DPTL, EGFS…SVNM, NGQT…SLNV, HQNT…SLDI, and KGET…KMRA. The helical transmembrane segment at 292–312 threads the bilayer; that stretch reads LFLLLMLSVITMWAVGYILDF. Over 313 to 320 the chain is Lumenal; that stretch reads NSDSWLLK. A helical transmembrane segment spans residues 321 to 341; that stretch reads GCLLVTLFFLTSLFPRFLVGY. The Cytoplasmic segment spans residues 342–347; that stretch reads KNLVYL. Residues 348-368 form a helical membrane-spanning segment; sequence PTAFLLSSVFWIFMTWFILFF. The Lumenal portion of the chain corresponds to 369–370; sequence PD. The helical transmembrane segment at 371–391 threads the bilayer; the sequence is LAGAPFYFSFIFSIVAFLYFF. Residues 392–470 lie on the Cytoplasmic side of the membrane; that stretch reads YKTWATDPGF…RCIGFGNHHY (79 aa). The DHHC domain maps to 426 to 476; the sequence is TFCTSCLIRKPLRSLHCHVCNSCVARYDQHCLWTGRCIGFGNHHYYIFFLF. Cys-456 functions as the S-palmitoyl cysteine intermediate in the catalytic mechanism. Residues 471–491 traverse the membrane as a helical segment; that stretch reads YIFFLFFLSMVCGWIIYGSFI. Residues 492 to 518 lie on the Lumenal side of the membrane; the sequence is YWSSHCATTFKEDGLWTYLNQIVACSP. Residues 519–539 form a helical membrane-spanning segment; that stretch reads WVLYILMLATFHFSWSTFLLL. Topologically, residues 540-622 are cytoplasmic; it reads NQLFQIAFLG…PAREKVLRSV (83 aa).

It belongs to the DHHC palmitoyltransferase family. AKR/ZDHHC17 subfamily. As to quaternary structure, interacts (via ANK repeats) with CLIP3. Interacts (via ANK repeats) with DNAJC5 (via C-terminus). Interacts (via ANK repeats) with HTT. Interacts (via ANK repeats) with MAP6. Interacts (via ANK repeats) with SNAP23. Interacts (via ANK repeats) with SNAP25. May interact (via ANK repeats) with SPRED2.

Its subcellular location is the golgi apparatus membrane. The protein resides in the cytoplasmic vesicle membrane. The catalysed reaction is L-cysteinyl-[protein] + hexadecanoyl-CoA = S-hexadecanoyl-L-cysteinyl-[protein] + CoA. In terms of biological role, palmitoyltransferase that could catalyze the addition of palmitate onto various protein substrates. Palmitoyltransferase for HTT and GAD2. May play a role in Mg(2+) transport. This Pongo abelii (Sumatran orangutan) protein is Palmitoyltransferase ZDHHC13.